A 443-amino-acid polypeptide reads, in one-letter code: Oxygen-dependent coproporphyrinogen-III oxidase, mitochondrial (443 aa).

A mitochondrion-targeting transit peptide spans 1-98 (MALRLGQLGS…EMVPKSSGAR (98 aa)). The disordered stretch occupies residues 90-111 (MVPKSSGARSPSPGRLEEDGDE). Phosphoserine is present on serine 101. The segment at 182-191 (VLQDGRVFEK) is important for dimerization. Coproporphyrinogen III is bound at residue serine 233. The active-site Proton donor is the histidine 247. Residue 249-251 (NYR) participates in coproporphyrinogen III binding. An important for dimerization region spans residues 381 to 417 (YVEFNLVYDRGTKFGLFTPGSRIESILMSLPLTARWE). At lysine 393 the chain carries N6-acetyllysine; alternate. At lysine 393 the chain carries N6-succinyllysine; alternate. 400–402 (GSR) is a binding site for coproporphyrinogen III.

This sequence belongs to the aerobic coproporphyrinogen-III oxidase family. In terms of assembly, homodimer.

Its subcellular location is the mitochondrion intermembrane space. The enzyme catalyses coproporphyrinogen III + O2 + 2 H(+) = protoporphyrinogen IX + 2 CO2 + 2 H2O. Its pathway is porphyrin-containing compound metabolism; protoporphyrin-IX biosynthesis; protoporphyrinogen-IX from coproporphyrinogen-III (O2 route): step 1/1. Functionally, involved in the heme biosynthesis. Catalyzes the aerobic oxidative decarboxylation of propionate groups of rings A and B of coproporphyrinogen-III to yield the vinyl groups in protoporphyrinogen-IX. The chain is Oxygen-dependent coproporphyrinogen-III oxidase, mitochondrial from Rattus norvegicus (Rat).